The primary structure comprises 471 residues: Putative multidrug resistance protein MdtD (471 aa).

Topologically, residues 1–11 (MTDLPDSTRWQ) are periplasmic. Residues 12 to 32 (LWIVAFGFFMQSLDTTIVNTA) form a helical membrane-spanning segment. Residues 33–48 (LPSMAQSLGESPLHMH) are Cytoplasmic-facing. The chain crosses the membrane as a helical span at residues 49–69 (MVIVSYVLTVAVMLPASGWLA). Residues 70 to 76 (DKVGVRN) are Periplasmic-facing. A helical membrane pass occupies residues 77-97 (IFFTAIVLFTLGSLFCALSGT). Topologically, residues 98 to 101 (LNEL) are cytoplasmic. The helical transmembrane segment at 102-124 (LLARALQGVGGAMMVPVGRLTVM) threads the bilayer. At 125–137 (KIVPREQYMAAMT) the chain is on the periplasmic side. Residues 138–158 (FVTLPGQVGPLLGPALGGLLV) form a helical membrane-spanning segment. The Cytoplasmic segment spans residues 159-164 (EYASWH). The helical transmembrane segment at 165 to 185 (WIFLINIPVGIIGAIATLMLM) threads the bilayer. The Periplasmic segment spans residues 186–196 (PNYTMQTRRFD). Residues 197-217 (LSGFLLLAVGMAVLTLALDGS) form a helical membrane-spanning segment. Over 218-224 (KGTGFSP) the chain is Cytoplasmic. A helical transmembrane segment spans residues 225–245 (LAIAGLVAVGVVALVLYLLHA). Residues 246–262 (QNNNRALFSLKLFRTRT) are Periplasmic-facing. The chain crosses the membrane as a helical span at residues 263-283 (FSLGLAGSFAGRIGSGMLPFM). At 284 to 285 (TP) the chain is on the cytoplasmic side. Residues 286 to 306 (VFLQIGLGFSPFHAGLMMIPM) traverse the membrane as a helical segment. The Periplasmic segment spans residues 307-341 (VLGSMGMKRIVVQVVNRFGYRRVLVATTLGLSLVT). A helical transmembrane segment spans residues 342 to 362 (LLFMTTALLGWYYVLPFVLFL). Residues 363-395 (QGMVNSTRFSSMNTLTLKDLPDNLASSGNSLLS) lie on the Cytoplasmic side of the membrane. The helical transmembrane segment at 396 to 416 (MIMQLSMSIGVTIAGLLLGLF) threads the bilayer. Residues 417 to 430 (GSQHVSVDSGTTQT) are Periplasmic-facing. Residues 431–451 (VFMYTWLSMAFIIALPAFVFA) form a helical membrane-spanning segment. Over 452-471 (RVPSDTHQNVAISRRKRSAQ) the chain is Cytoplasmic.

Belongs to the major facilitator superfamily. TCR/Tet family.

It localises to the cell inner membrane. This chain is Putative multidrug resistance protein MdtD, found in Escherichia coli O45:K1 (strain S88 / ExPEC).